The primary structure comprises 300 residues: Transcriptional dual regulator GltC (300 aa).

Residues 1–58 enclose the HTH lysR-type domain; it reads MELRQLRYFMEVAEREHVSEAADHLHVAQSAISRQIANLEEELNVTLFEREGRNIKLT. The segment at residues 18–37 is a DNA-binding region (H-T-H motif); that stretch reads VSEAADHLHVAQSAISRQIA.

Belongs to the LysR transcriptional regulatory family. In terms of assembly, interacts with gutamate dehydrogenase RocG.

With respect to regulation, activated by alpha-ketoglutarate and inhibited by glutamate and by RocG. Its function is as follows. Positive regulator of glutamate biosynthesis (gltAB genes). Negatively regulates its own expression. The polypeptide is Transcriptional dual regulator GltC (gltC) (Bacillus subtilis (strain 168)).